We begin with the raw amino-acid sequence, 744 residues long: Tripartite motif-containing protein 3 (744 aa).

Ala-2 carries the post-translational modification N-acetylalanine. The interval 2 to 290 is interaction with KIF21B; the sequence is AKREDSPGPE…LAAQAFPERP (289 aa). Position 7 is a phosphoserine (Ser-7). The RING-type zinc finger occupies 22 to 63; that stretch reads CSICLDRYRCPKVLPCLHTFCERCLQNYIPPQSLTLSCPVCR. A B box-type zinc finger spans residues 110–151; the sequence is GRPLSCPNHEGKTMEFYCEACETAMCGECRAGEHREHGTVLL. Zn(2+) is bound by residues Cys-115, His-118, Cys-138, and His-143. Residues 153-224 are a coiled coil; it reads DVVEQHKAAL…RKQALVSDLE (72 aa). Residues 317–418 form a Filamin repeat; that stretch reads TTSAAAHETV…VRGSPFRVRA (102 aa). The disordered stretch occupies residues 420-462; it reads RPGDLPPSPDDVKRRVKSPGGPGSHVRQKAVRRPSSMYSTGGK. Position 427 is a phosphoserine (Ser-427). NHL repeat units lie at residues 473–516, 520–563, 564–605, 609–652, 656–699, and 700–743; these read VFRV…FSNE, KFRF…FSPE, GKFK…FQPN, VGRF…YSAD, LFKF…FDSS, and GSFL…YRYL.

The protein belongs to the TRIM/RBCC family. Forms homooligomers. Interacts with TRIM2; this interaction reduces TRIM2 activity. Associates with myosin-Vb (MYO5B) and alpha-actinin-4 (ACTN4). Component of the CART complex, at least composed of ACTN4, HGS/HRS, MYO5B and TRIM3. Interacts with ZFYVE28/LST2. Interacts with KIF21B. In terms of tissue distribution, highly expressed in the brain, moderate levels in the lung, very low levels in the liver, kidney and heart. In the brain, expression was highest in the cerebellum. Expression in the brain is found at low levels at embryonic day 15 and then increases during the first two postnatal weeks before decreasing through adulthood.

It is found in the cytoplasm. It localises to the early endosome. The protein resides in the golgi apparatus. The protein localises to the trans-Golgi network. Its subcellular location is the cell projection. It is found in the dendrite. The enzyme catalyses S-ubiquitinyl-[E2 ubiquitin-conjugating enzyme]-L-cysteine + [acceptor protein]-L-lysine = [E2 ubiquitin-conjugating enzyme]-L-cysteine + N(6)-ubiquitinyl-[acceptor protein]-L-lysine.. In terms of biological role, E3 ubiquitin ligase that plays essential roles in neuronal functions such as regulation of neuronal plasticity, learning, and memory. In addition to its neuronal functions, participates in other biological processes such as innate immunity or cell cycle regulation. Component of the cytoskeleton-associated recycling or transport complex in neurons, polyubiquitinates gamma-actin, thus regulating neuronal plasticity, learning, and memory. Ubiquitinates postsynaptic scaffold GKAP, a neuronal substrate involved in synaptic remodeling and thereby modulates dendritic spine morphology. Positively regulates motility of microtubule-dependent motor protein KIF21B. Induces growth arrest via its RING-dependent E3 ligase activity and ubiquinates CDKN1A. Positively regulates TLR3-mediated signaling by mediating 'Lys-63'-linked polyubiquitination of TLR3. In turn, promotes the recognition and sorting of polyubiquitinated TLR3 by the ESCRT complexes. The protein is Tripartite motif-containing protein 3 (Trim3) of Rattus norvegicus (Rat).